Here is a 177-residue protein sequence, read N- to C-terminus: Large ribosomal subunit protein uL6 (177 aa).

It belongs to the universal ribosomal protein uL6 family. Part of the 50S ribosomal subunit.

This protein binds to the 23S rRNA, and is important in its secondary structure. It is located near the subunit interface in the base of the L7/L12 stalk, and near the tRNA binding site of the peptidyltransferase center. The protein is Large ribosomal subunit protein uL6 of Pseudomonas fluorescens (strain Pf0-1).